The following is a 547-amino-acid chain: Phosphomethylpyrimidine synthase (547 aa).

Substrate contacts are provided by residues asparagine 146, methionine 175, tyrosine 204, histidine 240, 260–262 (SRG), 301–304 (DGLR), and glutamate 340. Zn(2+) is bound at residue histidine 344. Tyrosine 367 is a substrate binding site. Residue histidine 408 participates in Zn(2+) binding. Residues cysteine 488, cysteine 491, and cysteine 496 each contribute to the [4Fe-4S] cluster site.

The protein belongs to the ThiC family. [4Fe-4S] cluster is required as a cofactor.

The catalysed reaction is 5-amino-1-(5-phospho-beta-D-ribosyl)imidazole + S-adenosyl-L-methionine = 4-amino-2-methyl-5-(phosphooxymethyl)pyrimidine + CO + 5'-deoxyadenosine + formate + L-methionine + 3 H(+). It functions in the pathway cofactor biosynthesis; thiamine diphosphate biosynthesis. Its function is as follows. Catalyzes the synthesis of the hydroxymethylpyrimidine phosphate (HMP-P) moiety of thiamine from aminoimidazole ribotide (AIR) in a radical S-adenosyl-L-methionine (SAM)-dependent reaction. This is Phosphomethylpyrimidine synthase from Mycobacterium bovis (strain ATCC BAA-935 / AF2122/97).